The chain runs to 196 residues: S-norcoclaurine synthase 2 (196 aa).

A signal peptide spans 1 to 19 (MRMEVVLVVFLMFIGTINC). 104–106 (YRE) provides a ligand contact to dopamine. Lys-118 (proton donor) is an active-site residue. Residue Asp-137 participates in (4-hydroxyphenyl)acetaldehyde binding.

Belongs to the BetVI family.

The enzyme catalyses (4-hydroxyphenyl)acetaldehyde + dopamine = (S)-norcoclaurine + H2O. Its activity is regulated as follows. Not inhibited by O-phenanthroline or EDTA. Involved in the biosynthesis of the common precursor of all benzylisoquinoline alkaloids such as morphine, sanguinarine, codeine or berberine. Condenses dopamine and pyruvic acid or 4-hydroxyphenylpyruvate. The polypeptide is S-norcoclaurine synthase 2 (PR10A) (Coptis japonica (Japanese goldthread)).